Reading from the N-terminus, the 144-residue chain is MKPVAALGLDIGRKRIGVAGCDGLGLLATALTTIQRTTLEADLAAIAHWIEQRHIQVLVVGLPYAMDGSLGKQAKQTQKFARKLAEAFGLPIEYVDERLTSVEAENQLKAEKQYDRQQKGLVDQRAAQIILQQWLETRQCASKP.

Belongs to the YqgF nuclease family.

Its subcellular location is the cytoplasm. In terms of biological role, could be a nuclease involved in processing of the 5'-end of pre-16S rRNA. This Picosynechococcus sp. (strain ATCC 27264 / PCC 7002 / PR-6) (Agmenellum quadruplicatum) protein is Putative pre-16S rRNA nuclease.